The chain runs to 229 residues: Methyltransferase ctvB (229 aa).

It belongs to the methyltransferase superfamily.

Its pathway is mycotoxin biosynthesis. Its function is as follows. Methyltransferase; part of the gene cluster that mediates the biosynthesis of citreoviridin, an inhibitor of the of F1-ATPase beta-subunit. The HR-PKS ctvA accepts acetyl-CoA as the starter unit and catalyzes eight iterations of malonyl-CoA extension and four iterations of SAM-dependent methylation at C4, C12, C14, and C16. The KR and DH domains selectively act on the first six iterations to generate the hexaene chain. In the last three iterations, the KR and DH domains terminate their functions to yield a beta,delta-diketo ester moiety, which then undergoes intramolecular cyclization to yield an alpha-pyrone intermediate. Subsequently, ctvB methylates the alpha-pyrone hydroxyl group to generate citreomontanin. In order to form the tetrahydrofuran ring with the correct stereochemistry, the terminal alkenes of citreomontanin need to undergo isomerization to yield a (17Z)-hexaene, a step that could be catalyzed by ctvC. The (17Z)-hexaene then undergoes bisepoxidation by ctvC to form a (17R,16R,15S,14R)-bisepoxide moiety. Lastly, ctvD acts as a regioselective hydrolase to form the tetrahydrofuran ring with the substituents in the correct absolute configuration, completing the biosynthesis of citreoviridin. This chain is Methyltransferase ctvB, found in Aspergillus terreus (strain NIH 2624 / FGSC A1156).